A 163-amino-acid polypeptide reads, in one-letter code: Nucleotide-binding protein Clos_1967 (163 aa).

The protein belongs to the YajQ family.

Its function is as follows. Nucleotide-binding protein. This is Nucleotide-binding protein Clos_1967 from Alkaliphilus oremlandii (strain OhILAs) (Clostridium oremlandii (strain OhILAs)).